Consider the following 236-residue polypeptide: Large ribosomal subunit protein uL2 (236 aa).

Residues 1 to 10 (MGHRITTQSR) show a composition bias toward polar residues. Disordered stretches follow at residues 1 to 20 (MGHR…YRAP) and 202 to 236 (GGGG…TGRR). Positions 224-236 (KVGHIAARRTGRR) are enriched in basic residues.

Belongs to the universal ribosomal protein uL2 family. Part of the 50S ribosomal subunit. Forms a bridge to the 30S subunit in the 70S ribosome.

In terms of biological role, one of the primary rRNA binding proteins. Required for association of the 30S and 50S subunits to form the 70S ribosome, for tRNA binding and peptide bond formation. It has been suggested to have peptidyltransferase activity; this is somewhat controversial. Makes several contacts with the 16S rRNA in the 70S ribosome. In Methanospirillum hungatei JF-1 (strain ATCC 27890 / DSM 864 / NBRC 100397 / JF-1), this protein is Large ribosomal subunit protein uL2.